Consider the following 593-residue polypeptide: UvrABC system protein C (593 aa).

In terms of domain architecture, GIY-YIG spans 17-94 (MEPGCYLMKD…IKQYQPRYNI (78 aa)). Positions 199-234 (KTILKSLEERMLTASESLDFERAKEYRDLIQHIQNL) constitute a UVR domain.

Belongs to the UvrC family. Interacts with UvrB in an incision complex.

It is found in the cytoplasm. Functionally, the UvrABC repair system catalyzes the recognition and processing of DNA lesions. UvrC both incises the 5' and 3' sides of the lesion. The N-terminal half is responsible for the 3' incision and the C-terminal half is responsible for the 5' incision. In Staphylococcus aureus (strain MSSA476), this protein is UvrABC system protein C.